Here is a 357-residue protein sequence, read N- to C-terminus: Methylthioribose-1-phosphate isomerase (357 aa).

Substrate-binding positions include 49–51 (RGA), arginine 89, and glutamine 197. Aspartate 238 acts as the Proton donor in catalysis. Residue 248–249 (NK) participates in substrate binding.

It belongs to the eIF-2B alpha/beta/delta subunits family. MtnA subfamily.

It carries out the reaction 5-(methylsulfanyl)-alpha-D-ribose 1-phosphate = 5-(methylsulfanyl)-D-ribulose 1-phosphate. It participates in amino-acid biosynthesis; L-methionine biosynthesis via salvage pathway; L-methionine from S-methyl-5-thio-alpha-D-ribose 1-phosphate: step 1/6. Catalyzes the interconversion of methylthioribose-1-phosphate (MTR-1-P) into methylthioribulose-1-phosphate (MTRu-1-P). In Leptospira biflexa serovar Patoc (strain Patoc 1 / Ames), this protein is Methylthioribose-1-phosphate isomerase.